A 329-amino-acid polypeptide reads, in one-letter code: uncharacterized protein (329 aa).

The protein to type I restriction system adenine methylases.

This is an uncharacterized protein from Bacillus subtilis (strain 168).